We begin with the raw amino-acid sequence, 443 residues long: ATP-dependent protease ATPase subunit HslU (443 aa).

ATP is bound by residues Ile-20, 62-67 (GVGKTE), Asp-255, Glu-321, and Arg-393.

It belongs to the ClpX chaperone family. HslU subfamily. In terms of assembly, a double ring-shaped homohexamer of HslV is capped on each side by a ring-shaped HslU homohexamer. The assembly of the HslU/HslV complex is dependent on binding of ATP.

The protein resides in the cytoplasm. In terms of biological role, ATPase subunit of a proteasome-like degradation complex; this subunit has chaperone activity. The binding of ATP and its subsequent hydrolysis by HslU are essential for unfolding of protein substrates subsequently hydrolyzed by HslV. HslU recognizes the N-terminal part of its protein substrates and unfolds these before they are guided to HslV for hydrolysis. In Helicobacter pylori (strain J99 / ATCC 700824) (Campylobacter pylori J99), this protein is ATP-dependent protease ATPase subunit HslU.